We begin with the raw amino-acid sequence, 559 residues long: AP-4 complex accessory subunit tepsin (559 aa).

The region spanning 2-135 (LDRLAFLQQL…FSESIPSPSH (134 aa)) is the ENTH domain. Disordered stretches follow at residues 131 to 157 (PSPSHTVSAKERSQSGMGSQASSAPAL), 214 to 290 (AIPS…ESLD), and 472 to 491 (PNGAANQKNPNGSTEKSDPA). Composition is skewed to low complexity over residues 144-154 (QSGMGSQASSA) and 266-281 (SRSSDVGSKSGSDGQS). The segment covering 472-485 (PNGAANQKNPNGST) has biased composition (polar residues).

It localises to the golgi apparatus. The protein resides in the trans-Golgi network membrane. Its subcellular location is the cytoplasmic vesicle. The protein localises to the cytoplasm. It is found in the cytosol. Functionally, may play a role in vesicular trafficking of proteins at the trans-Golgi network. The protein is AP-4 complex accessory subunit tepsin of Xenopus laevis (African clawed frog).